The sequence spans 1516 residues: MMRSVAWAALSWRVFWLSLLWTAVSAKQDKPKIDSVMLEHPPLNLNYFEDSDVIVFQDIEERNIYRSEDAGFTWNKVKELPDGGSAFLYLHPFESSTAFVLTKDRKHYKTEDRGKSWTEFDSGSMPSAFQPDTLIFHAGDPKRIIFNGMNCDGIFCDEETTYTLDGFKTIQPLRPSTSGCWWAKSNTEFTTGDEDLDKTRILCIVTDPLSIFKTSQKLCVSDTFFKKENNGKYQEFEPTLDSNRDVTGVVSLAAVKSFILVASSSANSDEMALYVTSNANQWHRAMFPSDDSHDHSHQINQEAYTVLESTNYSIQIDVMTSHPSRPMGVIFTSNSNGTYFTENIPYTNRNIKGHVDFEKISGIQGIFLVNTVENGKDVDEGSAEKVVVTQITFDDGRTFEPVKAGDQRIHLHSMTQINNIGRIFSSPAPGLVMGNGNTGKSLGKFDDSNLYVSDDAGVTWKQALEGPHKYEFGDSGTILVAVRDSAKEDVDKVSYSLNYGDTWESVPLPKDLKIRPALLTTTQDSTSLKFLLIGEHDKRYHMVALDFEALEKSTCGDKDMESWNARVDDKGQATCIMGRKQTYKRRTKKADCFIKSNFKDPEPINEPCDCTDADFECDYNFQRDPEDRTVCKRVGSIPMPQGACKDKDDKFKGSSGWRMIPGNQCKRTKGAQKDDEVERKCSEGGGGNSGGDGSSPSVPANGEISHKKNDFDSEALDMQKYYLIRGDSSSGTDETIIARPIGERTGNSVQVENKVWLTSDHGKSWKRILDQEDIMKIFHHDYFKDVMFFSTKTDKILYTIDRGQTFHSFKTPVASDDFTLSFHPDKKDWLIWVGKHCDDVSGSKSCFPAASISTDRGDHWKTLVRYATKCEFTGNSAYKYRPLTQIVCLVHQEENLESPKTIVTINDFLADDKLIHNGTVASFATMNEFILATDEVTEAGKEKAGLQAIASLDGQHFEAAQFPYNFHDSHSSLYTVLDSSNHAVNLFVATDLSDGRRRGSIIKSNSNGTTYVLSASNVNSDEAGYVDFEKVAGLEGVTLINVVANPDKKDGKKEIQTKISHNDGAEWDFLPPPSKDVDGKAYKCSSAGDSKCALHLHHYTERDNKRRTFSASKAIGLIFGVGNVGSTLGEMKDADTFMSADGGINWKNVKKGAWTWQYGDQGSIIVLAERATHGNGAKTKTVSYSLDEGETWNEYEFTDKEVTILDLTSVKTGAARNFLVWCRSDSKQLFSVNIDFTGLTDKACEYKDDASASDYELWSPKHPLQKNDCFFGHVAKYLRKKKDRKCFNKATLSLLHGYENCECTRRDFECAYNYELDNHGQCSLVPGFQPLSGEEWCKQNPNETTWFEPTGYRRLPLTTCKDGVELDKTSDEHACEGYEDEFKRKHRTSGWVIFFAVVIPIGLAAAIGWYVWRNWSGKFGQIRLGDNSSTFDSDQPWIKYPVIAISAVAAVAAAMPLVIISLWRSATGVYERVSNRSRGGNWSRRYTTRDSFARSDYSMVDDDEGELLGEESDEEV.

Positions 1 to 26 (MMRSVAWAALSWRVFWLSLLWTAVSA) are cleaved as a signal peptide. At 27-1390 (KQDKPKIDSV…EFKRKHRTSG (1364 aa)) the chain is on the lumenal side. The BNR 1 repeat unit spans residues 108–118 (YKTEDRGKSWT). Asn-311 and Asn-336 each carry an N-linked (GlcNAc...) asparagine glycan. 3 BNR repeats span residues 390-400 (QITFDDGRTFE), 451-461 (YVSDDAGVTWK), and 495-504 (YSLNYGDTWE). The disordered stretch occupies residues 642 to 709 (GACKDKDDKF…ANGEISHKKN (68 aa)). Positions 671–682 (AQKDDEVERKCS) are enriched in basic and acidic residues. A compositionally biased stretch (gly residues) spans 683-693 (EGGGGNSGGDG). BNR repeat units follow at residues 756 to 766 (WLTSDHGKSWK), 798 to 807 (YTIDRGQTFH), and 852 to 861 (ISTDRGDHWK). 2 N-linked (GlcNAc...) asparagine glycosylation sites follow: Asn-917 and Asn-1007. BNR repeat units lie at residues 1137–1147 (FMSADGGINWK) and 1184–1193 (YSLDEGETWN). Asn-1342 carries an N-linked (GlcNAc...) asparagine glycan. Residues 1391–1411 (WVIFFAVVIPIGLAAAIGWYV) traverse the membrane as a helical segment. The Cytoplasmic portion of the chain corresponds to 1412–1441 (WRNWSGKFGQIRLGDNSSTFDSDQPWIKYP). Residues 1442–1462 (VIAISAVAAVAAAMPLVIISL) traverse the membrane as a helical segment. Residues 1463 to 1516 (WRSATGVYERVSNRSRGGNWSRRYTTRDSFARSDYSMVDDDEGELLGEESDEEV) are Lumenal-facing.

The protein belongs to the VPS10-related sortilin family.

It is found in the golgi apparatus. It localises to the trans-Golgi network membrane. Its subcellular location is the prevacuolar compartment membrane. Its function is as follows. Functions as a sorting receptor in the Golgi compartment required for the intracellular sorting and delivery of soluble vacuolar proteins, like carboxypeptidase Y (CPY) and proteinase A. Executes multiple rounds of sorting by cycling between the late Golgi and a prevacuolar endosome-like compartment. This Fusarium vanettenii (strain ATCC MYA-4622 / CBS 123669 / FGSC 9596 / NRRL 45880 / 77-13-4) (Fusarium solani subsp. pisi) protein is Vacuolar protein sorting/targeting protein 10 (VPS10).